The following is a 389-amino-acid chain: Succinate--CoA ligase [ADP-forming] subunit beta (389 aa).

Residues lysine 9–threonine 244 enclose the ATP-grasp domain. Residues lysine 46, glycine 53–glycine 55, glycine 102, and glutamate 107 each bind ATP. Mg(2+)-binding residues include asparagine 199 and aspartate 213. Substrate contacts are provided by residues asparagine 264 and glycine 321–valine 323.

It belongs to the succinate/malate CoA ligase beta subunit family. Heterotetramer of two alpha and two beta subunits. Requires Mg(2+) as cofactor.

The enzyme catalyses succinate + ATP + CoA = succinyl-CoA + ADP + phosphate. It catalyses the reaction GTP + succinate + CoA = succinyl-CoA + GDP + phosphate. Its pathway is carbohydrate metabolism; tricarboxylic acid cycle; succinate from succinyl-CoA (ligase route): step 1/1. Succinyl-CoA synthetase functions in the citric acid cycle (TCA), coupling the hydrolysis of succinyl-CoA to the synthesis of either ATP or GTP and thus represents the only step of substrate-level phosphorylation in the TCA. The beta subunit provides nucleotide specificity of the enzyme and binds the substrate succinate, while the binding sites for coenzyme A and phosphate are found in the alpha subunit. This chain is Succinate--CoA ligase [ADP-forming] subunit beta, found in Xanthomonas oryzae pv. oryzae (strain MAFF 311018).